Here is a 111-residue protein sequence, read N- to C-terminus: Nucleoid-associated protein Teth514_0034 (111 aa).

This sequence belongs to the YbaB/EbfC family. As to quaternary structure, homodimer.

The protein resides in the cytoplasm. The protein localises to the nucleoid. In terms of biological role, binds to DNA and alters its conformation. May be involved in regulation of gene expression, nucleoid organization and DNA protection. In Thermoanaerobacter sp. (strain X514), this protein is Nucleoid-associated protein Teth514_0034.